The chain runs to 690 residues: Eukaryotic translation initiation factor 3 subunit B (690 aa).

The segment covering 1-11 has biased composition (basic and acidic residues); sequence MAKKKSEEHSG. The segment at 1–36 is disordered; sequence MAKKKSEEHSGADANDSDYQEEPNFEDPPGFVDNIS. Residues 15–25 are compositionally biased toward acidic residues; that stretch reads NDSDYQEEPNF. Residues 57–141 form the RRM domain; sequence SVVVVDNIPK…HTFAVNLFTD (85 aa). 5 WD repeats span residues 207 to 246, 293 to 331, 334 to 369, 442 to 484, and 530 to 575; these read TRER…KIQK, DGMS…LLDL, IKIP…TLME, EIRE…KPSL, and PDHF…IKRT. A coiled-coil region spans residues 595–645; that stretch reads EEKQKEIKKNLKKYYAAFEQKDRLRLTRASKELLEKRSQLRETFMEYRNKR.

The protein belongs to the eIF-3 subunit B family. As to quaternary structure, component of the eukaryotic translation initiation factor 3 (eIF-3) complex. The eIF-3 complex interacts with pix. Interacts with mxt.

The protein resides in the cytoplasm. In terms of biological role, RNA-binding component of the eukaryotic translation initiation factor 3 (eIF-3) complex, which is involved in protein synthesis of a specialized repertoire of mRNAs and, together with other initiation factors, stimulates binding of mRNA and methionyl-tRNAi to the 40S ribosome. The eIF-3 complex specifically targets and initiates translation of a subset of mRNAs involved in cell proliferation. This is Eukaryotic translation initiation factor 3 subunit B from Drosophila yakuba (Fruit fly).